The sequence spans 644 residues: Phosphatidylinositol polyphosphate 5-phosphatase type IV (644 aa).

Residues 1-193 (MPSKAENLRP…RLPSLLPPRP (193 aa)) are disordered. 8 tandem repeats follow at residues 10-13 (PSEP), 15-18 (PQPP), 28-31 (PGAP), 39-42 (PPDA), 55-58 (PATP), 69-71 (PIA), 72-74 (PRP), and 75-78 (PARP). Residues 10 to 242 (PSEPAPQPPE…SLGPGRPRSP (233 aa)) form a 13 X 4 AA repeats of P-X-X-P region. The segment covering 78–90 (PRLERALSLDDKG) has biased composition (basic and acidic residues). Ser-99 carries the phosphoserine modification. Over residues 107-118 (NGTSPSRGSVQS) the composition is skewed to polar residues. Copy 9 of the repeat occupies 121–124 (PGAP). Over residues 152-163 (GSPSSGGNPLSG) the composition is skewed to low complexity. Tandem repeats lie at residues 169–172 (PNLP), 183–185 (PRL), 190–193 (PPRP), and 236–239 (PGRP). Ser-241 and Ser-256 each carry phosphoserine. A Cysteine methyl ester modification is found at Cys-641. Cys-641 is lipidated: S-farnesyl cysteine. A propeptide spans 642–644 (SVS) (removed in mature form).

This sequence belongs to the inositol 1,4,5-trisphosphate 5-phosphatase type IV family. As to quaternary structure, interacts (when prenylated) with PDE6D; this is important for normal location in cilia. As to expression, detected in brain, heart, pancreas, testis and spleen.

Its subcellular location is the cytoplasm. It is found in the cytoskeleton. It localises to the cilium axoneme. The protein resides in the golgi apparatus. The protein localises to the golgi stack membrane. Its subcellular location is the cell membrane. It is found in the cell projection. It localises to the ruffle. The protein resides in the nucleus. It carries out the reaction a 1,2-diacyl-sn-glycero-3-phospho-(1D-myo-inositol-4,5-bisphosphate) + H2O = a 1,2-diacyl-sn-glycero-3-phospho-(1D-myo-inositol 4-phosphate) + phosphate. The catalysed reaction is a 1,2-diacyl-sn-glycero-3-phospho-(1D-myo-inositol-3,4,5-trisphosphate) + H2O = a 1,2-diacyl-sn-glycero-3-phospho-(1D-myo-inositol-3,4-bisphosphate) + phosphate. It catalyses the reaction a 1,2-diacyl-sn-glycero-3-phospho-(1D-myo-inositol-3,5-bisphosphate) + H2O = a 1,2-diacyl-sn-glycero-3-phospho-(1D-myo-inositol-3-phosphate) + phosphate. Its activity is regulated as follows. Active in the presence of octyl-glucoside or Triton X-100, but completely inhibited by CTAB. Phosphatidylinositol (PtdIns) phosphatase that specifically hydrolyzes the 5-phosphate of phosphatidylinositol-3,4,5-trisphosphate (PtdIns(3,4,5)P3), phosphatidylinositol 4,5-bisphosphate (PtdIns(4,5)P2) and phosphatidylinositol 3,5-bisphosphate (PtdIns(3,5)P2). Specific for lipid substrates, inactive towards water soluble inositol phosphates. Plays an essential role in the primary cilium by controlling ciliary growth and phosphoinositide 3-kinase (PI3K) signaling and stability. The sequence is that of Phosphatidylinositol polyphosphate 5-phosphatase type IV (INPP5E) from Homo sapiens (Human).